We begin with the raw amino-acid sequence, 556 residues long: Phenylalanine--tRNA ligase beta subunit (556 aa).

The B5 domain occupies 278–354 (LTPKEFEVSF…IAYGYNNIDP (77 aa)). Residues Asp332, Asp338, Glu341, and Asp342 each contribute to the Mg(2+) site.

Belongs to the phenylalanyl-tRNA synthetase beta subunit family. Type 2 subfamily. As to quaternary structure, tetramer of two alpha and two beta subunits. Mg(2+) is required as a cofactor.

The protein localises to the cytoplasm. The enzyme catalyses tRNA(Phe) + L-phenylalanine + ATP = L-phenylalanyl-tRNA(Phe) + AMP + diphosphate + H(+). The sequence is that of Phenylalanine--tRNA ligase beta subunit from Pyrococcus furiosus (strain ATCC 43587 / DSM 3638 / JCM 8422 / Vc1).